The following is a 391-amino-acid chain: MSIIKMADLTLANQRVLIREDLNVPVTDGKITSDARLRAALPTLKLALEAGAKVMVMSHLGRPTEGQPEEKFSLKPVTDYLSAALNYPVRLVTDYLDGVDVAAGELVVFENIRFNLGEKKNDDTLAKKLAALCDVFVMDAFGTAHRAQASTHGVAKFAATACAGPLLSGELEALGKALDNPARPLVAIVGGSKVSTKLTVLDSLAGIVDQLVVGGGIANTFIAADGHNVGKSLYEADLVEEATRLTKQAKANNGDIPVPSDVVVATEFSASATATLKPVNEVTADEMIFDIGPETAKALTEIIANAGTIVWNGPVGVFEFDQFGEGTKVIAQAIADSSAFSIAGGGDTLAAVDKYEIADKISYISTGGGAFLEFLEGKKLPAVEILEQRAK.

Substrate contacts are provided by residues 21-23 (DLN), Arg-36, 59-62 (HLGR), Arg-113, and Arg-146. Residues Lys-197, Glu-319, and 345 to 348 (GGDT) contribute to the ATP site.

It belongs to the phosphoglycerate kinase family. Monomer.

Its subcellular location is the cytoplasm. It catalyses the reaction (2R)-3-phosphoglycerate + ATP = (2R)-3-phospho-glyceroyl phosphate + ADP. Its pathway is carbohydrate degradation; glycolysis; pyruvate from D-glyceraldehyde 3-phosphate: step 2/5. The polypeptide is Phosphoglycerate kinase (Colwellia psychrerythraea (strain 34H / ATCC BAA-681) (Vibrio psychroerythus)).